Consider the following 595-residue polypeptide: UvrABC system protein C (595 aa).

Residues 14-91 form the GIY-YIG domain; that stretch reads NNPGCYLHKD…IQENMPKFNI (78 aa). Positions 196–231 constitute a UVR domain; the sequence is DKIVNQLKAKMKDMSDQMEFERAAEYRDLIEAVSTL.

Belongs to the UvrC family. In terms of assembly, interacts with UvrB in an incision complex.

The protein resides in the cytoplasm. The UvrABC repair system catalyzes the recognition and processing of DNA lesions. UvrC both incises the 5' and 3' sides of the lesion. The N-terminal half is responsible for the 3' incision and the C-terminal half is responsible for the 5' incision. This Streptococcus thermophilus (strain ATCC BAA-250 / LMG 18311) protein is UvrABC system protein C.